Consider the following 145-residue polypeptide: 3-dehydroquinate dehydratase (145 aa).

Y23 acts as the Proton acceptor in catalysis. Substrate contacts are provided by N74, H80, and D87. Catalysis depends on H100, which acts as the Proton donor. Residues 101-102 and R111 each bind substrate; that span reads LS.

It belongs to the type-II 3-dehydroquinase family. Homododecamer.

It catalyses the reaction 3-dehydroquinate = 3-dehydroshikimate + H2O. The protein operates within metabolic intermediate biosynthesis; chorismate biosynthesis; chorismate from D-erythrose 4-phosphate and phosphoenolpyruvate: step 3/7. Functionally, catalyzes a trans-dehydration via an enolate intermediate. This chain is 3-dehydroquinate dehydratase, found in Halalkalibacterium halodurans (strain ATCC BAA-125 / DSM 18197 / FERM 7344 / JCM 9153 / C-125) (Bacillus halodurans).